A 628-amino-acid polypeptide reads, in one-letter code: Biosynthetic arginine decarboxylase (628 aa).

Residue Lys-101 is modified to N6-(pyridoxal phosphate)lysine. 281–291 lines the substrate pocket; it reads VDVGGGLGVDY.

The protein belongs to the Orn/Lys/Arg decarboxylase class-II family. SpeA subfamily. Requires Mg(2+) as cofactor. Pyridoxal 5'-phosphate is required as a cofactor.

It carries out the reaction L-arginine + H(+) = agmatine + CO2. Its pathway is amine and polyamine biosynthesis; agmatine biosynthesis; agmatine from L-arginine: step 1/1. Functionally, catalyzes the biosynthesis of agmatine from arginine. The polypeptide is Biosynthetic arginine decarboxylase (Alkalilimnicola ehrlichii (strain ATCC BAA-1101 / DSM 17681 / MLHE-1)).